A 275-amino-acid chain; its full sequence is NAD kinase (275 aa).

Asp-68 serves as the catalytic Proton acceptor. NAD(+)-binding positions include 68-69, Arg-73, 136-137, Lys-147, Arg-164, Asp-166, 177-182, Ala-201, and Gln-236; these read DG, NE, and TAYAMS.

This sequence belongs to the NAD kinase family. Requires a divalent metal cation as cofactor.

The protein localises to the cytoplasm. It catalyses the reaction NAD(+) + ATP = ADP + NADP(+) + H(+). Functionally, involved in the regulation of the intracellular balance of NAD and NADP, and is a key enzyme in the biosynthesis of NADP. Catalyzes specifically the phosphorylation on 2'-hydroxyl of the adenosine moiety of NAD to yield NADP. The protein is NAD kinase of Methanosarcina acetivorans (strain ATCC 35395 / DSM 2834 / JCM 12185 / C2A).